We begin with the raw amino-acid sequence, 157 residues long: Ribosomal RNA large subunit methyltransferase H (157 aa).

S-adenosyl-L-methionine is bound by residues leucine 73, glycine 104, and 123–128 (LGPLTL).

The protein belongs to the RNA methyltransferase RlmH family. As to quaternary structure, homodimer.

Its subcellular location is the cytoplasm. The catalysed reaction is pseudouridine(1915) in 23S rRNA + S-adenosyl-L-methionine = N(3)-methylpseudouridine(1915) in 23S rRNA + S-adenosyl-L-homocysteine + H(+). In terms of biological role, specifically methylates the pseudouridine at position 1915 (m3Psi1915) in 23S rRNA. This is Ribosomal RNA large subunit methyltransferase H from Xylella fastidiosa (strain M12).